The sequence spans 183 residues: Dual-action ribosomal maturation protein DarP (183 aa).

The tract at residues 1 to 27 (MSSHSQEPVGEENFDDSEYDRPSKSQV) is disordered. Acidic residues predominate over residues 9 to 18 (VGEENFDDSE).

Belongs to the DarP family.

It localises to the cytoplasm. In terms of biological role, member of a network of 50S ribosomal subunit biogenesis factors which assembles along the 30S-50S interface, preventing incorrect 23S rRNA structures from forming. Promotes peptidyl transferase center (PTC) maturation. The polypeptide is Dual-action ribosomal maturation protein DarP (Bordetella parapertussis (strain 12822 / ATCC BAA-587 / NCTC 13253)).